Here is a 119-residue protein sequence, read N- to C-terminus: Immunoglobulin heavy variable 2-70 (119 aa).

The signal sequence occupies residues 1-19 (MDILCSTLLLLTVPSWVLS). Gln-20 carries the pyrrolidone carboxylic acid modification. The tract at residues 20–44 (QVTLRESGPALVKPTQTLTLTCTFS) is framework-1. One can recognise an Ig-like domain in the interval 20–119 (QVTLRESGPA…DTATYYCARI (100 aa)). Cys-41 and Cys-116 are joined by a disulfide. A complementarity-determining-1 region spans residues 45-54 (GFSLSTSGMC). Residues 55–71 (VSWIRQPPGKALEWLAL) form a framework-2 region. Residues 72-78 (IDWDDDK) form a complementarity-determining-2 region. Residues 79–116 (YYSTSLKTRLTISKDTSKNQVVLTMTNMDPVDTATYYC) are framework-3. Residues 117–119 (ARI) form a complementarity-determining-3 region.

As to quaternary structure, immunoglobulins are composed of two identical heavy chains and two identical light chains; disulfide-linked.

The protein resides in the secreted. It is found in the cell membrane. In terms of biological role, v region of the variable domain of immunoglobulin heavy chains that participates in the antigen recognition. Immunoglobulins, also known as antibodies, are membrane-bound or secreted glycoproteins produced by B lymphocytes. In the recognition phase of humoral immunity, the membrane-bound immunoglobulins serve as receptors which, upon binding of a specific antigen, trigger the clonal expansion and differentiation of B lymphocytes into immunoglobulins-secreting plasma cells. Secreted immunoglobulins mediate the effector phase of humoral immunity, which results in the elimination of bound antigens. The antigen binding site is formed by the variable domain of one heavy chain, together with that of its associated light chain. Thus, each immunoglobulin has two antigen binding sites with remarkable affinity for a particular antigen. The variable domains are assembled by a process called V-(D)-J rearrangement and can then be subjected to somatic hypermutations which, after exposure to antigen and selection, allow affinity maturation for a particular antigen. This chain is Immunoglobulin heavy variable 2-70, found in Homo sapiens (Human).